The following is a 311-amino-acid chain: Heme A synthase (311 aa).

Topologically, residues 1–6 (MQRFIK) are cytoplasmic. Residues 7–27 (WLAVITSLDLLIVLLGGALVT) traverse the membrane as a helical segment. Residues 28-62 (KTGSGQGCGKSWPLCNGEFVPSNLSMETIIELSHR) lie on the Extracellular side of the membrane. A disulfide bridge connects residues C35 and C42. The active site involves E58. H61 is a binding site for heme o. The chain crosses the membrane as a helical span at residues 63–83 (LTSGSAGILVTLLCILSWKYY). At 84-91 (KHVRETKT) the chain is on the cytoplasmic side. A helical transmembrane segment spans residues 92-112 (LAILSFVFLVAQALMGAAAVV). The Extracellular segment spans residues 113–121 (WGQMPAVLA). The helical transmembrane segment at 122–142 (IHFGISLISFASVILLTCLIF) threads the bilayer. H123 contacts heme o. The Cytoplasmic segment spans residues 143–159 (EIDQKFDARSLIMDKKM). A helical transmembrane segment spans residues 160 to 180 (KFHIYGVTIYSYIVVYTGALV). Topologically, residues 181–211 (RHERASLACPDFPLCSKNRPMPTQLHEWVQM) are extracellular. Residues C189 and C195 are joined by a disulfide bond. The chain crosses the membrane as a helical span at residues 212–232 (GHRVAAMLIFAWILYAMILAI). Heme b is bound at residue H213. Residues 233-243 (RHYKQQPVVYW) are Cytoplasmic-facing. Residues 244-264 (GWIISFILVTLQAIVGILVVF) form a helical membrane-spanning segment. Residues 265–271 (TNASLSM) are Extracellular-facing. The chain crosses the membrane as a helical span at residues 272–292 (ALLHSLFISCLFAVLCYLVML). Residue H275 participates in heme b binding. Residues 293–311 (GTRSKVNAKEAASTSKQTK) are Cytoplasmic-facing.

This sequence belongs to the COX15/CtaA family. Type 1 subfamily. Interacts with CtaB. It depends on heme b as a cofactor.

It localises to the cell membrane. The catalysed reaction is Fe(II)-heme o + 2 A + H2O = Fe(II)-heme a + 2 AH2. It participates in porphyrin-containing compound metabolism; heme A biosynthesis; heme A from heme O: step 1/1. Functionally, catalyzes the conversion of heme O to heme A by two successive hydroxylations of the methyl group at C8. The first hydroxylation forms heme I, the second hydroxylation results in an unstable dihydroxymethyl group, which spontaneously dehydrates, resulting in the formyl group of heme A. In Bacillus cereus (strain ATCC 10987 / NRS 248), this protein is Heme A synthase.